Consider the following 258-residue polypeptide: MHDWDPALYQRFESEHTRPAVELLARVSHPAPRHIVDLGCGNGNSTQLLLERFPQSQLIGLDNSEAMLASARKRLPGVPFVQADIADWAPTVAPDLIFANASLQWVAGHAGLFARLMRCLAPGGVLAVQMPDNLDQPSHQLMRELASQSAWRDQLAHAADQRAALLSVEAYYDLLAPMACRVDIWHTAYRHVMPSVQAIVEWLESTGLKPFLDPLPAVLRDAYLQAYTQRIGEAYTKRADGHRLFAFPRLFIVAQRAP.

The protein belongs to the methyltransferase superfamily. Tam family.

The protein resides in the cytoplasm. The enzyme catalyses trans-aconitate + S-adenosyl-L-methionine = (E)-3-(methoxycarbonyl)pent-2-enedioate + S-adenosyl-L-homocysteine. Catalyzes the S-adenosylmethionine monomethyl esterification of trans-aconitate. In Acidovorax sp. (strain JS42), this protein is Trans-aconitate 2-methyltransferase.